The chain runs to 757 residues: Protein Lines homolog 1 (757 aa).

Phosphoserine is present on S635.

Belongs to the protein lines family. As to expression, expressed in adult testis, prostate, prostate, spleen, thymus, skeletal muscle, fetal kidney and brain.

This chain is Protein Lines homolog 1, found in Homo sapiens (Human).